The chain runs to 377 residues: G-protein coupled receptor 54 (377 aa).

Residues 1-49 (MYSSEELWNSTEQVWINGSGTNFSLGRHEDDEEEEGDKHPFFTDAWLVP) are Extracellular-facing. Asn9, Asn17, and Asn22 each carry an N-linked (GlcNAc...) asparagine glycan. A helical transmembrane segment spans residues 50–70 (LFFSLIMLVGLVGNSLVIYVI). Topologically, residues 71–91 (SKHRQMRTATNFYIANLAATD) are cytoplasmic. A helical transmembrane segment spans residues 92-112 (IIFLVCCVPFTATLYPLPGWI). Residues 113 to 119 (FGNFMCK) are Extracellular-facing. Residues Cys118 and Cys198 are joined by a disulfide bond. A helical transmembrane segment spans residues 120 to 140 (FVAFLQQVTVQATCITLTAMS). Over 141–160 (GDRCYVTVYPLKSLRHRTPK) the chain is Cytoplasmic. A helical membrane pass occupies residues 161-181 (VAMIVSICIWIGSFVLSTPIL). Residues 182-209 (MYQRIEEGYWYGPRQYCMERFPSKTHER) are Extracellular-facing. Residues 210-230 (AFILYQFIAAYLLPVLTISFC) form a helical membrane-spanning segment. The Cytoplasmic portion of the chain corresponds to 231–269 (YTLMVKRVGQPTVEPVDNNYQVNLLSERTISIRSKVSKM). Residues 270–290 (VVVIVLLFAICWGPIQIFVLF) form a helical membrane-spanning segment. Residues 291–305 (QSFYPNYQPNYATYK) lie on the Extracellular side of the membrane. A helical transmembrane segment spans residues 306 to 328 (IKTWANCMSYANSSVNPIVYGFM). Topologically, residues 329–377 (GASFQKSFRKTFPFLFKHKVRDSSMASRTANAEIKFVAAEEGNNNNAVN) are cytoplasmic.

This sequence belongs to the G-protein coupled receptor 1 family. In terms of tissue distribution, expressed in a significantly high percentage (45-60%) of mature GnRH1, GnRH2, and GnRH3 neurons and in immature GnRH3 neurons, which had migrated to the vicinity of their final locations in the brain. Only 5% of immature GnRH1 and GnRH2 neurons have receptor transcripts.

The protein resides in the cell membrane. Its function is as follows. Receptor speculated to be essential for sexual development. May regulate gonadotropin-releasing hormone (GnRH) secretion. The receptor expression could be a 'stop signal' for GnRH1, GnRH2, and GnRH3 neuronal migration, leading to suppression of cell growth and modulation of GnRH secretion, which is important for normal sexual development. This is G-protein coupled receptor 54 (gpr54) from Oreochromis niloticus (Nile tilapia).